A 150-amino-acid polypeptide reads, in one-letter code: Ribonuclease K6 (150 aa).

The N-terminal stretch at 1–23 (MVLCFPLLLLLLVLWGPVCLLHA) is a signal peptide. The active-site Proton acceptor is His38. 4 disulfide bridges follow: Cys46/Cys104, Cys60/Cys114, Cys78/Cys129, and Cys85/Cys92. Residue Asn55 is glycosylated (N-linked (GlcNAc...) asparagine). Substrate is bound by residues 61–65 (KHQNT) and Lys86. N-linked (GlcNAc...) asparagine glycosylation occurs at Asn100. Arg105 contacts substrate. Residue His145 is the Proton donor of the active site.

It belongs to the pancreatic ribonuclease family. As to quaternary structure, interacts (via N-terminus) with bacterial lipopolysaccharide (LPS).

It localises to the secreted. The protein localises to the lysosome. The protein resides in the cytoplasmic granule. Ribonuclease which shows a preference for the pyrimidines uridine and cytosine. Has potent antibacterial activity against a range of Gram-positive and Gram-negative bacteria, including P.aeruginosa, A.baumanii, M.luteus, S.aureus, E.faecalis, E.faecium, S.saprophyticus and E.coli. Causes loss of bacterial membrane integrity, and also promotes agglutination of Gram-negative bacteria. Probably contributes to urinary tract sterility. Bactericidal activity is independent of RNase activity. The polypeptide is Ribonuclease K6 (RNASE6) (Chlorocebus aethiops (Green monkey)).